Here is a 353-residue protein sequence, read N- to C-terminus: Stachydrine N-demethylase reductase subunit Stc4 (353 aa).

The FAD-binding FR-type domain occupies serine 11–valine 114. One can recognise a 2Fe-2S ferredoxin-type domain in the interval alanine 269–alanine 353. Residues cysteine 303, cysteine 308, cysteine 311, and cysteine 341 each coordinate [2Fe-2S] cluster.

In the N-terminal section; belongs to the FAD-binding oxidoreductase type 6 family. In terms of assembly, the system is probably composed of an oxygenase subunit (Stc2) and two reductase subunits (Stc3 and Stc4). FAD serves as cofactor. It depends on [2Fe-2S] cluster as a cofactor.

In terms of biological role, reductase involved in the catabolism of stachydrine (L-proline betaine), a source of carbon and nitrogen. Part of a Rieske-type oxygenase system that catalyzes the demethylation of stachydrine to produce N-methyl-L-proline (monomethylproline). This subunit is probably involved in the transfer of electrons from NAD(P)H to the catalytic subunit Stc2. This Rhizobium meliloti (strain 1021) (Ensifer meliloti) protein is Stachydrine N-demethylase reductase subunit Stc4.